We begin with the raw amino-acid sequence, 626 residues long: Phosphomethylpyrimidine synthase (626 aa).

Substrate is bound by residues asparagine 237, methionine 266, tyrosine 295, histidine 331, 351 to 353 (SRG), 392 to 395 (DGLR), and glutamate 431. Histidine 435 is a binding site for Zn(2+). Tyrosine 458 contacts substrate. Histidine 499 is a binding site for Zn(2+). [4Fe-4S] cluster-binding residues include cysteine 579, cysteine 582, and cysteine 587.

Belongs to the ThiC family. As to quaternary structure, homodimer. [4Fe-4S] cluster is required as a cofactor.

It carries out the reaction 5-amino-1-(5-phospho-beta-D-ribosyl)imidazole + S-adenosyl-L-methionine = 4-amino-2-methyl-5-(phosphooxymethyl)pyrimidine + CO + 5'-deoxyadenosine + formate + L-methionine + 3 H(+). The protein operates within cofactor biosynthesis; thiamine diphosphate biosynthesis. Functionally, catalyzes the synthesis of the hydroxymethylpyrimidine phosphate (HMP-P) moiety of thiamine from aminoimidazole ribotide (AIR) in a radical S-adenosyl-L-methionine (SAM)-dependent reaction. This chain is Phosphomethylpyrimidine synthase, found in Cupriavidus necator (strain ATCC 17699 / DSM 428 / KCTC 22496 / NCIMB 10442 / H16 / Stanier 337) (Ralstonia eutropha).